Reading from the N-terminus, the 222-residue chain is Pyrrolidone-carboxylate peptidase (222 aa).

Active-site residues include glutamate 80, cysteine 146, and histidine 170.

The protein belongs to the peptidase C15 family. In terms of assembly, homotetramer.

It localises to the cytoplasm. The catalysed reaction is Release of an N-terminal pyroglutamyl group from a polypeptide, the second amino acid generally not being Pro.. Functionally, removes 5-oxoproline from various penultimate amino acid residues except L-proline. The chain is Pyrrolidone-carboxylate peptidase from Mycobacterium tuberculosis (strain ATCC 25177 / H37Ra).